A 357-amino-acid polypeptide reads, in one-letter code: Actin, cytoplasmic (357 aa).

This sequence belongs to the actin family. Post-translationally, met-1 may be removed after translation.

The protein resides in the cytoplasm. It localises to the cytoskeleton. The enzyme catalyses ATP + H2O = ADP + phosphate + H(+). In terms of biological role, actins are highly conserved proteins that are involved in various types of cell motility and are ubiquitously expressed in all eukaryotic cells. In Oxytricha fallax, this protein is Actin, cytoplasmic.